Reading from the N-terminus, the 44-residue chain is Thymosin beta (44 aa).

The interval 1–44 (MSDKHDKPDISEVTKFDKSKLKKTETHEKNPLPTKETIDQEKQG) is disordered. At Ser2 the chain carries N-acetylserine.

Expressed in regenerating axons.

Its subcellular location is the cytoplasm. It localises to the cytoskeleton. In terms of biological role, plays an important role in the organization of the cytoskeleton. Binds to and sequesters actin monomers (G actin) and therefore inhibits actin polymerization. May be involved in the regulation of structural plasticity in the CNS. The protein is Thymosin beta of Aplysia californica (California sea hare).